Here is a 262-residue protein sequence, read N- to C-terminus: Small ribosomal subunit protein eS4 (262 aa).

The S4 RNA-binding domain occupies 42–104 (LPLLIFLRNR…TGEFFRLIYD (63 aa)).

This sequence belongs to the eukaryotic ribosomal protein eS4 family.

This Lysiphlebus testaceipes (Greenbugs aphid parastoid) protein is Small ribosomal subunit protein eS4 (RpS4).